The sequence spans 124 residues: uncharacterized protein (124 aa).

Residues 1-18 form the signal peptide; the sequence is MHIIKTLISVGVAFSLSA. Cysteine 19 carries N-palmitoyl cysteine lipidation. The S-diacylglycerol cysteine moiety is linked to residue cysteine 19.

It localises to the cell membrane. This is an uncharacterized protein from Pasteurella multocida (strain Pm70).